The primary structure comprises 264 residues: 3-methyl-2-oxobutanoate hydroxymethyltransferase (264 aa).

Mg(2+) contacts are provided by Asp-45 and Asp-84. 3-methyl-2-oxobutanoate contacts are provided by residues 45–46, Asp-84, and Lys-112; that span reads DS. Mg(2+) is bound at residue Glu-114. The active-site Proton acceptor is Glu-181.

The protein belongs to the PanB family. Homodecamer; pentamer of dimers. The cofactor is Mg(2+).

Its subcellular location is the cytoplasm. It catalyses the reaction 3-methyl-2-oxobutanoate + (6R)-5,10-methylene-5,6,7,8-tetrahydrofolate + H2O = 2-dehydropantoate + (6S)-5,6,7,8-tetrahydrofolate. Its pathway is cofactor biosynthesis; (R)-pantothenate biosynthesis; (R)-pantoate from 3-methyl-2-oxobutanoate: step 1/2. In terms of biological role, catalyzes the reversible reaction in which hydroxymethyl group from 5,10-methylenetetrahydrofolate is transferred onto alpha-ketoisovalerate to form ketopantoate. The sequence is that of 3-methyl-2-oxobutanoate hydroxymethyltransferase from Vibrio vulnificus (strain YJ016).